A 463-amino-acid polypeptide reads, in one-letter code: L-seryl-tRNA(Sec) selenium transferase (463 aa).

Residue Lys295 is modified to N6-(pyridoxal phosphate)lysine.

It belongs to the SelA family. As to quaternary structure, homodecamer; pentamer of dimers. Binds only one seryl-tRNA(Sec) per dimer. Pyridoxal 5'-phosphate serves as cofactor.

The protein resides in the cytoplasm. The enzyme catalyses L-seryl-tRNA(Sec) + selenophosphate + H(+) = L-selenocysteinyl-tRNA(Sec) + phosphate. It functions in the pathway aminoacyl-tRNA biosynthesis; selenocysteinyl-tRNA(Sec) biosynthesis; selenocysteinyl-tRNA(Sec) from L-seryl-tRNA(Sec) (bacterial route): step 1/1. Functionally, converts seryl-tRNA(Sec) to selenocysteinyl-tRNA(Sec) required for selenoprotein biosynthesis. The protein is L-seryl-tRNA(Sec) selenium transferase of Salmonella paratyphi B (strain ATCC BAA-1250 / SPB7).